The following is a 132-amino-acid chain: Small ribosomal subunit protein uS11 (132 aa).

It belongs to the universal ribosomal protein uS11 family. As to quaternary structure, part of the 30S ribosomal subunit. Interacts with proteins S7 and S18. Binds to IF-3.

Functionally, located on the platform of the 30S subunit, it bridges several disparate RNA helices of the 16S rRNA. Forms part of the Shine-Dalgarno cleft in the 70S ribosome. This Chlamydia felis (strain Fe/C-56) (Chlamydophila felis) protein is Small ribosomal subunit protein uS11.